We begin with the raw amino-acid sequence, 333 residues long: Geranylgeranyl pyrophosphate synthase olcC (333 aa).

Residues lysine 61, arginine 64, and histidine 93 each coordinate isopentenyl diphosphate. Mg(2+) contacts are provided by aspartate 100 and aspartate 104. Residue arginine 109 participates in dimethylallyl diphosphate binding. Residue arginine 110 coordinates isopentenyl diphosphate. Residues lysine 187, threonine 188, and glutamine 221 each coordinate dimethylallyl diphosphate. Position 224 (aspartate 224) interacts with Mg(2+). Dimethylallyl diphosphate contacts are provided by asparagine 228, lysine 238, and lysine 248.

Belongs to the FPP/GGPP synthase family. It depends on Mg(2+) as a cofactor.

It catalyses the reaction isopentenyl diphosphate + dimethylallyl diphosphate = (2E)-geranyl diphosphate + diphosphate. The catalysed reaction is isopentenyl diphosphate + (2E)-geranyl diphosphate = (2E,6E)-farnesyl diphosphate + diphosphate. The enzyme catalyses isopentenyl diphosphate + (2E,6E)-farnesyl diphosphate = (2E,6E,10E)-geranylgeranyl diphosphate + diphosphate. It functions in the pathway secondary metabolite biosynthesis; terpenoid biosynthesis. Its function is as follows. Geranylgeranyl pyrophosphate synthase; part of the gene cluster that mediates the biosynthesis of 15-deoxyoxalicine B. The first step of the pathway is the synthesis of nicotinyl-CoA from nicotinic acid by the nicotinic acid-CoA ligase olcI. Nicotinyl-CoA is then a substrate of polyketide synthase olcA to produce 4-hydroxy-6-(3-pyridinyl)-2H-pyran-2-one (HPPO) which is further prenylated by the polyprenyl transferase olcH to yield geranylgeranyl-HPPO. Geranylgeranyl pyrophosphate is provided by the cluster-specific geranylgeranyl pyrophosphate synthase olcC. The FAD-dependent monooxygenase olcE catalyzes the epoxidation of geranylgeranyl-HPPO and the terpene cyclase olcD catalyzes the cyclization of the terpenoid component, resulting in the formation of the tricyclic terpene moiety seen in predecaturin E. The cytochrome P450 monooxygenase then catalyzes the allylic oxidation of predecaturin E, which is followed by spirocylization with concomitant loss of one molecule of water to form decaturin E. Decaturin E is the substrate of the cytochrome P450 monooxygenase olcJ which hydroxylates it at the C-29 position to form decaturin F. The short-chain dehydrogenase/reductase olcF may catalyze the oxidation of decaturin F to generate the 29-hydroxyl-27-one intermediate, and subsequent hemiacetal formation probably leads to the formation of decaturin C. The dioxygenase olcK may be a peroxisomal enzyme that catalyzes the hydroxylation of decaturin C into decaturin A once decaturin C is shuttled into the peroxisome by the MFS transporter olcL. Finally the cytochrome P450 monooxygenase olcB catalyzes the oxidative rearrangement to yield 15-deoxyoxalicine B. In the absence of olcJ, decaturin E may be shunted to a pathway in which it is oxidized to a ketone, possibly by olcF, to form decaturin D, which undergoes further allylic oxidation to yield decaturin G. Moreover, in the absence of oclK or oclL, oclB can convert decaturin C into 15-deoxyoxalicine A. This chain is Geranylgeranyl pyrophosphate synthase olcC, found in Penicillium canescens.